A 680-amino-acid chain; its full sequence is DNA ligase (680 aa).

Residues 35–39 (DADFD), 86–87 (SL), and Glu111 each bind NAD(+). Lys113 acts as the N6-AMP-lysine intermediate in catalysis. Arg134, Glu174, Lys290, and Lys314 together coordinate NAD(+). 4 residues coordinate Zn(2+): Cys408, Cys411, Cys427, and Cys433. Residues 597–680 (VAEQTLEGLT…RLLNTGSADE (84 aa)) enclose the BRCT domain.

Belongs to the NAD-dependent DNA ligase family. LigA subfamily. The cofactor is Mg(2+). Requires Mn(2+) as cofactor.

It catalyses the reaction NAD(+) + (deoxyribonucleotide)n-3'-hydroxyl + 5'-phospho-(deoxyribonucleotide)m = (deoxyribonucleotide)n+m + AMP + beta-nicotinamide D-nucleotide.. In terms of biological role, DNA ligase that catalyzes the formation of phosphodiester linkages between 5'-phosphoryl and 3'-hydroxyl groups in double-stranded DNA using NAD as a coenzyme and as the energy source for the reaction. It is essential for DNA replication and repair of damaged DNA. The sequence is that of DNA ligase from Corynebacterium glutamicum (strain ATCC 13032 / DSM 20300 / JCM 1318 / BCRC 11384 / CCUG 27702 / LMG 3730 / NBRC 12168 / NCIMB 10025 / NRRL B-2784 / 534).